The following is a 248-amino-acid chain: Probable transcriptional regulatory protein Desal_2886 (248 aa).

Residues 1 to 21 (MAGHSKWANIQHRKGRQDAKR) are disordered.

The protein belongs to the TACO1 family.

The protein resides in the cytoplasm. The protein is Probable transcriptional regulatory protein Desal_2886 of Maridesulfovibrio salexigens (strain ATCC 14822 / DSM 2638 / NCIMB 8403 / VKM B-1763) (Desulfovibrio salexigens).